A 317-amino-acid chain; its full sequence is Pantothenate kinase (317 aa).

99–106 is a binding site for ATP; that stretch reads GSVSVGKS.

It belongs to the prokaryotic pantothenate kinase family.

The protein localises to the cytoplasm. It catalyses the reaction (R)-pantothenate + ATP = (R)-4'-phosphopantothenate + ADP + H(+). The protein operates within cofactor biosynthesis; coenzyme A biosynthesis; CoA from (R)-pantothenate: step 1/5. The protein is Pantothenate kinase of Mannheimia succiniciproducens (strain KCTC 0769BP / MBEL55E).